The chain runs to 105 residues: CRISPR-associated endoribonuclease Cas2 1 (105 aa).

D20 contacts Mg(2+).

Belongs to the CRISPR-associated endoribonuclease Cas2 protein family. Homodimer, forms a heterotetramer with a Cas1 homodimer. Mg(2+) is required as a cofactor.

Functionally, CRISPR (clustered regularly interspaced short palindromic repeat), is an adaptive immune system that provides protection against mobile genetic elements (viruses, transposable elements and conjugative plasmids). CRISPR clusters contain sequences complementary to antecedent mobile elements and target invading nucleic acids. CRISPR clusters are transcribed and processed into CRISPR RNA (crRNA). Functions as a ssRNA-specific endoribonuclease. Involved in the integration of spacer DNA into the CRISPR cassette. This chain is CRISPR-associated endoribonuclease Cas2 1 (cas21), found in Nitrosomonas europaea (strain ATCC 19718 / CIP 103999 / KCTC 2705 / NBRC 14298).